Here is a 103-residue protein sequence, read N- to C-terminus: ISTSKLCVSYTIWKVGDYDASLGTMLLETGGTIGQADSSWFKIVQSSQFGYNLLYCPVTSTMSCPFSLDDQFCLKVGVVHQNGKRRLALVNGNPLECLFKQVQ.

Cysteine 56 and cysteine 73 are joined by a disulfide.

The protein belongs to the protease inhibitor I3 (leguminous Kunitz-type inhibitor) family.

It localises to the vacuole. Functionally, inhibitor of serine protease. May protect the plant by inhibiting proteases of invading organisms. The protein is Serine protease inhibitor 4 of Solanum tuberosum (Potato).